The chain runs to 292 residues: Pyridoxal 5'-phosphate synthase subunit PdxS (292 aa).

Aspartate 22 serves as a coordination point for D-ribose 5-phosphate. The active-site Schiff-base intermediate with D-ribose 5-phosphate is lysine 79. D-ribose 5-phosphate is bound at residue glycine 151. D-glyceraldehyde 3-phosphate is bound at residue arginine 163. D-ribose 5-phosphate contacts are provided by residues glycine 212 and 233-234 (GS).

This sequence belongs to the PdxS/SNZ family. In terms of assembly, in the presence of PdxT, forms a dodecamer of heterodimers.

It carries out the reaction aldehydo-D-ribose 5-phosphate + D-glyceraldehyde 3-phosphate + L-glutamine = pyridoxal 5'-phosphate + L-glutamate + phosphate + 3 H2O + H(+). Its pathway is cofactor biosynthesis; pyridoxal 5'-phosphate biosynthesis. Functionally, catalyzes the formation of pyridoxal 5'-phosphate from ribose 5-phosphate (RBP), glyceraldehyde 3-phosphate (G3P) and ammonia. The ammonia is provided by the PdxT subunit. Can also use ribulose 5-phosphate and dihydroxyacetone phosphate as substrates, resulting from enzyme-catalyzed isomerization of RBP and G3P, respectively. The polypeptide is Pyridoxal 5'-phosphate synthase subunit PdxS (Ruminiclostridium cellulolyticum (strain ATCC 35319 / DSM 5812 / JCM 6584 / H10) (Clostridium cellulolyticum)).